A 288-amino-acid polypeptide reads, in one-letter code: ATP synthase gamma chain (288 aa).

The protein belongs to the ATPase gamma chain family. F-type ATPases have 2 components, CF(1) - the catalytic core - and CF(0) - the membrane proton channel. CF(1) has five subunits: alpha(3), beta(3), gamma(1), delta(1), epsilon(1). CF(0) has three main subunits: a, b and c.

The protein resides in the cell inner membrane. Its function is as follows. Produces ATP from ADP in the presence of a proton gradient across the membrane. The gamma chain is believed to be important in regulating ATPase activity and the flow of protons through the CF(0) complex. The protein is ATP synthase gamma chain of Polaromonas sp. (strain JS666 / ATCC BAA-500).